A 416-amino-acid chain; its full sequence is Serine hydroxymethyltransferase (416 aa).

Residues Leu121 and 125–127 (GHL) each bind (6S)-5,6,7,8-tetrahydrofolate. Lys229 is subject to N6-(pyridoxal phosphate)lysine.

Belongs to the SHMT family. Homodimer. Pyridoxal 5'-phosphate is required as a cofactor.

It is found in the cytoplasm. The catalysed reaction is (6R)-5,10-methylene-5,6,7,8-tetrahydrofolate + glycine + H2O = (6S)-5,6,7,8-tetrahydrofolate + L-serine. Its pathway is one-carbon metabolism; tetrahydrofolate interconversion. The protein operates within amino-acid biosynthesis; glycine biosynthesis; glycine from L-serine: step 1/1. Catalyzes the reversible interconversion of serine and glycine with tetrahydrofolate (THF) serving as the one-carbon carrier. This reaction serves as the major source of one-carbon groups required for the biosynthesis of purines, thymidylate, methionine, and other important biomolecules. Also exhibits THF-independent aldolase activity toward beta-hydroxyamino acids, producing glycine and aldehydes, via a retro-aldol mechanism. The polypeptide is Serine hydroxymethyltransferase (Bordetella avium (strain 197N)).